A 375-amino-acid chain; its full sequence is Trichodiene synthase (375 aa).

It belongs to the trichodiene synthase family.

It catalyses the reaction (2E,6E)-farnesyl diphosphate = trichodiene + diphosphate. It functions in the pathway sesquiterpene biosynthesis; trichothecene biosynthesis. TS is a member of the terpene cyclase group of enzymes. It catalyzes the isomerization and cyclization of farnesyl pyro-phosphate to form trichodiene, the first cyclic intermediate in the biosynthetic pathway for trichothecenes. It serves to branch trichothecene biosynthesis from the isoprenoid pathway. The protein is Trichodiene synthase (TRI5) of Fusarium pseudograminearum (Wheat and barley crown-rot fungus).